Consider the following 409-residue polypeptide: NADH-quinone oxidoreductase subunit D (409 aa).

Belongs to the complex I 49 kDa subunit family. NDH-1 is composed of 14 different subunits. Subunits NuoB, C, D, E, F, and G constitute the peripheral sector of the complex.

The protein localises to the cell inner membrane. It catalyses the reaction a quinone + NADH + 5 H(+)(in) = a quinol + NAD(+) + 4 H(+)(out). NDH-1 shuttles electrons from NADH, via FMN and iron-sulfur (Fe-S) centers, to quinones in the respiratory chain. The immediate electron acceptor for the enzyme in this species is believed to be ubiquinone. Couples the redox reaction to proton translocation (for every two electrons transferred, four hydrogen ions are translocated across the cytoplasmic membrane), and thus conserves the redox energy in a proton gradient. This Thermus thermophilus (strain ATCC BAA-163 / DSM 7039 / HB27) protein is NADH-quinone oxidoreductase subunit D (nuoD).